A 190-amino-acid polypeptide reads, in one-letter code: Dynactin subunit 6 (190 aa).

Thr186 is modified (phosphothreonine; by CDK1).

It belongs to the dynactin subunits 5/6 family. Dynactin subunit 6 subfamily. As to quaternary structure, subunit of dynactin, a multiprotein complex part of a tripartite complex with dynein and a adapter, such as BICDL1, BICD2 or HOOK3. The dynactin complex is built around ACTR1A/ACTB filament and consists of an actin-related filament composed of a shoulder domain, a pointed end and a barbed end. Its length is defined by its flexible shoulder domain. The soulder is composed of 2 DCTN1 subunits, 4 DCTN2 and 2 DCTN3. The 4 DCNT2 (via N-terminus) bind the ACTR1A filament and act as molecular rulers to determine the length. The pointed end is important for binding dynein-dynactin cargo adapters. Consists of 4 subunits: ACTR10, DCNT4, DCTN5 and DCTN6. Within the complex DCTN6 forms a heterodimer with DCTN5. The barbed end is composed of a CAPZA1:CAPZB heterodimers, which binds ACTR1A/ACTB filament and dynactin and stabilizes dynactin. Interacts with PLK1. Interacts with N4BP2L1. Post-translationally, phosphorylation at Thr-186 by CDK1 during mitotic prometaphase creates a binding site for PLK1 that facilitates its recruitment to kinetochores. In terms of tissue distribution, ubiquitous.

It is found in the cytoplasm. Its subcellular location is the cytoskeleton. The protein resides in the chromosome. It localises to the centromere. The protein localises to the kinetochore. Its function is as follows. Part of the dynactin complex that activates the molecular motor dynein for ultra-processive transport along microtubules. The protein is Dynactin subunit 6 of Homo sapiens (Human).